Reading from the N-terminus, the 202-residue chain is Interleukin-17D (202 aa).

An N-terminal signal peptide occupies residues Met-1–Ala-15. Positions Gln-65–Pro-85 are disordered. Asn-68 and Asn-181 each carry an N-linked (GlcNAc...) asparagine glycan.

It belongs to the IL-17 family. In terms of tissue distribution, expressed preferentially in adipose, skeletal muscle and CNS.

It localises to the secreted. Induces expression of IL6, CXCL8/IL8, and CSF2/GM-CSF from endothelial cells. This chain is Interleukin-17D (IL17D), found in Homo sapiens (Human).